Here is a 549-residue protein sequence, read N- to C-terminus: Ribosomal protein S6 kinase-like 1 (549 aa).

The MIT domain maps to 87–115; it reads IHVDPNKERREAVKLKITKYLRRAEEIFN. Residues 145 to 539 form the Protein kinase domain; the sequence is SAVEQLRGCR…VSKLKSHPFF (395 aa). ATP is bound by residues 151-159 and Lys-177; that span reads RGCRVVGVI. Positions 260-325 are disordered; sequence LTPARLPSGH…SDLPKAPGGH (66 aa). The active-site Proton acceptor is Asp-412.

The protein belongs to the protein kinase superfamily. Ser/Thr protein kinase family. S6 kinase subfamily.

It carries out the reaction L-seryl-[protein] + ATP = O-phospho-L-seryl-[protein] + ADP + H(+). The catalysed reaction is L-threonyl-[protein] + ATP = O-phospho-L-threonyl-[protein] + ADP + H(+). The chain is Ribosomal protein S6 kinase-like 1 (RPS6KL1) from Pongo abelii (Sumatran orangutan).